Reading from the N-terminus, the 321-residue chain is Lipoyl synthase (321 aa).

[4Fe-4S] cluster-binding residues include C60, C65, C71, C86, C90, C93, and S299. The region spanning 72-288 (WEKKHATFMI…ETIGRTKGFL (217 aa)) is the Radical SAM core domain.

This sequence belongs to the radical SAM superfamily. Lipoyl synthase family. The cofactor is [4Fe-4S] cluster.

It localises to the cytoplasm. It carries out the reaction [[Fe-S] cluster scaffold protein carrying a second [4Fe-4S](2+) cluster] + N(6)-octanoyl-L-lysyl-[protein] + 2 oxidized [2Fe-2S]-[ferredoxin] + 2 S-adenosyl-L-methionine + 4 H(+) = [[Fe-S] cluster scaffold protein] + N(6)-[(R)-dihydrolipoyl]-L-lysyl-[protein] + 4 Fe(3+) + 2 hydrogen sulfide + 2 5'-deoxyadenosine + 2 L-methionine + 2 reduced [2Fe-2S]-[ferredoxin]. Its pathway is protein modification; protein lipoylation via endogenous pathway; protein N(6)-(lipoyl)lysine from octanoyl-[acyl-carrier-protein]: step 2/2. Catalyzes the radical-mediated insertion of two sulfur atoms into the C-6 and C-8 positions of the octanoyl moiety bound to the lipoyl domains of lipoate-dependent enzymes, thereby converting the octanoylated domains into lipoylated derivatives. In Brucella anthropi (strain ATCC 49188 / DSM 6882 / CCUG 24695 / JCM 21032 / LMG 3331 / NBRC 15819 / NCTC 12168 / Alc 37) (Ochrobactrum anthropi), this protein is Lipoyl synthase.